Reading from the N-terminus, the 187-residue chain is Elongation factor P (187 aa).

It belongs to the elongation factor P family.

Its subcellular location is the cytoplasm. The protein operates within protein biosynthesis; polypeptide chain elongation. Its function is as follows. Involved in peptide bond synthesis. Stimulates efficient translation and peptide-bond synthesis on native or reconstituted 70S ribosomes in vitro. Probably functions indirectly by altering the affinity of the ribosome for aminoacyl-tRNA, thus increasing their reactivity as acceptors for peptidyl transferase. This Kocuria rhizophila (strain ATCC 9341 / DSM 348 / NBRC 103217 / DC2201) protein is Elongation factor P.